We begin with the raw amino-acid sequence, 338 residues long: Pyridoxal 5'-phosphate synthase subunit PdxS (338 aa).

Aspartate 66 lines the D-ribose 5-phosphate pocket. The active-site Schiff-base intermediate with D-ribose 5-phosphate is the lysine 123. Glycine 195 lines the D-ribose 5-phosphate pocket. Lysine 207 serves as a coordination point for D-glyceraldehyde 3-phosphate. Residues glycine 256 and 277 to 278 (GS) each bind D-ribose 5-phosphate.

This sequence belongs to the PdxS/SNZ family. In the presence of PdxT, forms a dodecamer of heterodimers.

It carries out the reaction aldehydo-D-ribose 5-phosphate + D-glyceraldehyde 3-phosphate + L-glutamine = pyridoxal 5'-phosphate + L-glutamate + phosphate + 3 H2O + H(+). It functions in the pathway cofactor biosynthesis; pyridoxal 5'-phosphate biosynthesis. In terms of biological role, catalyzes the formation of pyridoxal 5'-phosphate from ribose 5-phosphate (RBP), glyceraldehyde 3-phosphate (G3P) and ammonia. The ammonia is provided by the PdxT subunit. Can also use ribulose 5-phosphate and dihydroxyacetone phosphate as substrates, resulting from enzyme-catalyzed isomerization of RBP and G3P, respectively. The protein is Pyridoxal 5'-phosphate synthase subunit PdxS of Saccharolobus islandicus (strain L.S.2.15 / Lassen #1) (Sulfolobus islandicus).